We begin with the raw amino-acid sequence, 38 residues long: Esterase-5 (38 aa).

The segment at 1–38 (SAAADPLIVELPNGKVRGRDNEGYYEAEGIPRAEPPVG) is disordered.

This sequence belongs to the type-B carboxylesterase/lipase family.

It carries out the reaction a carboxylic ester + H2O = an alcohol + a carboxylate + H(+). This is Esterase-5 (Est-5) from Drosophila mojavensis (Fruit fly).